Here is a 357-residue protein sequence, read N- to C-terminus: DNA integrity scanning protein DisA (357 aa).

Residues 8-146 (VKSMINILQL…GNLRYTLKDI (139 aa)) enclose the DAC domain. Residues Gly-75, Leu-93, and 106–110 (MRHRT) contribute to the ATP site.

The protein belongs to the DisA family. Homooctamer. Requires Mg(2+) as cofactor.

It catalyses the reaction 2 ATP = 3',3'-c-di-AMP + 2 diphosphate. Participates in a DNA-damage check-point that is active prior to asymmetric division when DNA is damaged. DisA forms globular foci that rapidly scan along the chromosomes during sporulation, searching for lesions. When a lesion is present, DisA pauses at the lesion site. This triggers a cellular response that culminates in a temporary block in sporulation initiation. Its function is as follows. Also has diadenylate cyclase activity, catalyzing the condensation of 2 ATP molecules into cyclic di-AMP (c-di-AMP). c-di-AMP acts as a signaling molecule that couples DNA integrity with progression of sporulation. The rise in c-di-AMP level generated by DisA while scanning the chromosome, operates as a positive signal that advances sporulation; upon encountering a lesion, the DisA focus arrests at the damaged site and halts c-di-AMP synthesis. The protein is DNA integrity scanning protein DisA of Bacillus cereus (strain ATCC 14579 / DSM 31 / CCUG 7414 / JCM 2152 / NBRC 15305 / NCIMB 9373 / NCTC 2599 / NRRL B-3711).